We begin with the raw amino-acid sequence, 475 residues long: Probable dolichyl pyrophosphate Man9GlcNAc2 alpha-1,3-glucosyltransferase (475 aa).

The next 8 membrane-spanning stretches (helical) occupy residues Val114–Leu133, Gly161–Leu181, Ala235–Val255, Met296–Phe316, Val322–Val342, Leu385–Ser405, Ile418–Ala438, and Lys441–Phe461.

The protein belongs to the ALG6/ALG8 glucosyltransferase family.

Its subcellular location is the endoplasmic reticulum membrane. The enzyme catalyses an alpha-D-Man-(1-&gt;2)-alpha-D-Man-(1-&gt;2)-alpha-D-Man-(1-&gt;3)-[alpha-D-Man-(1-&gt;2)-alpha-D-Man-(1-&gt;3)-[alpha-D-Man-(1-&gt;2)-alpha-D-Man-(1-&gt;6)]-alpha-D-Man-(1-&gt;6)]-beta-D-Man-(1-&gt;4)-beta-D-GlcNAc-(1-&gt;4)-alpha-D-GlcNAc-diphospho-di-trans,poly-cis-dolichol + a di-trans,poly-cis-dolichyl beta-D-glucosyl phosphate = an alpha-D-Glc-(1-&gt;3)-alpha-D-Man-(1-&gt;2)-alpha-D-Man-(1-&gt;2)-alpha-D-Man-(1-&gt;3)-[alpha-D-Man-(1-&gt;2)-alpha-D-Man-(1-&gt;3)-[alpha-D-Man-(1-&gt;2)-alpha-D-Man-(1-&gt;6)]-alpha-D-Man-(1-&gt;6)]-beta-D-Man-(1-&gt;4)-beta-D-GlcNAc-(1-&gt;4)-alpha-D-GlcNAc-diphospho-di-trans,poly-cis-dolichol + a di-trans,poly-cis-dolichyl phosphate + H(+). Its pathway is protein modification; protein glycosylation. Adds the first glucose residue to the lipid-linked oligosaccharide precursor for N-linked glycosylation. Transfers glucose from dolichyl phosphate glucose (Dol-P-Glc) onto the lipid-linked oligosaccharide Man(9)GlcNAc(2)-PP-Dol. Involved in cuticle differentiation. The polypeptide is Probable dolichyl pyrophosphate Man9GlcNAc2 alpha-1,3-glucosyltransferase (gny) (Drosophila melanogaster (Fruit fly)).